The primary structure comprises 477 residues: Fibrinogen beta chain (477 aa).

A disordered region spans residues 1 to 76; the sequence is EDLSLVGQPE…ASPRPQEAQK (76 aa). Y13 carries the sulfotyrosine modification. A glycan (N-linked (GlcNAc...) asparagine) is linked at N27. A compositionally biased stretch (basic residues) spans 44 to 55; that stretch reads RVRRPPLRHRRL. 3 disulfide bridges follow: C220-C304, C230-C259, and C412-C425. Residues 221–476 form the Fibrinogen C-terminal domain; it reads RVPVVSGMHC…QMAMKLRPKW (256 aa).

In terms of assembly, heterohexamer; disulfide linked. Contains 2 sets of 3 non-identical chains (alpha, beta and gamma). The 2 heterotrimers are in head to head conformation with the N-termini in a small central domain. Post-translationally, conversion of fibrinogen to fibrin is triggered by thrombin, which cleaves fibrinopeptides A and B from alpha and beta chains, and thus exposes the N-terminal polymerization sites responsible for the formation of the soft clot. The soft clot is converted into the hard clot by factor XIIIA which catalyzes the epsilon-(gamma-glutamyl)lysine cross-linking between gamma chains (stronger) and between alpha chains (weaker) of different monomers.

The protein resides in the secreted. Its function is as follows. Fibrinogen has a double function: yielding monomers that polymerize into fibrin and acting as a cofactor in platelet aggregation. The chain is Fibrinogen beta chain from Petromyzon marinus (Sea lamprey).